The chain runs to 575 residues: Probable ferredoxin/ferredoxin--NADP reductase (575 aa).

2 4Fe-4S ferredoxin-type domains span residues 2 to 29 (PHVITQSCCNDASCVFACPVNCIHPTPD) and 37 to 66 (EMLYIDPVACVDCGACVTACPVSAIAPNTR). [4Fe-4S] cluster contacts are provided by cysteine 9, cysteine 15, cysteine 19, cysteine 46, cysteine 49, cysteine 52, and cysteine 56. Residues 115–575 (VAVVGSGPAA…GQPIVLTVPL (461 aa)) form a ferredoxin--NADP reductase region. Residues alanine 123, glutamate 143, leucine 151, and isoleucine 187 each contribute to the FAD site. NADP(+)-binding positions include arginine 213, 258–261 (NGNV), 302–303 (RR), and glutamate 314. FAD-binding positions include tryptophan 456 and 463 to 465 (GFI). Glycine 463 contacts NADP(+).

In the C-terminal section; belongs to the ferredoxin--NADP reductase family. [4Fe-4S] cluster is required as a cofactor. It depends on FAD as a cofactor.

It catalyses the reaction 2 reduced [2Fe-2S]-[ferredoxin] + NADP(+) + H(+) = 2 oxidized [2Fe-2S]-[ferredoxin] + NADPH. The chain is Probable ferredoxin/ferredoxin--NADP reductase (fprB) from Mycobacterium bovis (strain ATCC BAA-935 / AF2122/97).